A 458-amino-acid polypeptide reads, in one-letter code: Nuclear transcription factor Y subunit gamma (458 aa).

Residues 305-315 (QQQFSQFTDGQ) show a composition bias toward low complexity. Residues 305 to 379 (QQQFSQFTDG…QQSSTSPPPS (75 aa)) are disordered. Residues 339 to 351 (TGNSTPCTSSLPT) are compositionally biased toward polar residues.

It belongs to the NFYC/HAP5 subunit family. In terms of assembly, heterotrimeric transcription factor composed of three components, NF-YA, NF-YB and NF-YC. NF-YB and NF-YC must interact and dimerize for NF-YA association and DNA binding.

It is found in the nucleus. In terms of biological role, component of the sequence-specific heterotrimeric transcription factor (NF-Y) which specifically recognizes a 5'-CCAAT-3' box motif found in the promoters of its target genes. NF-Y can function as both an activator and a repressor, depending on its interacting cofactors. This chain is Nuclear transcription factor Y subunit gamma (NFYC), found in Homo sapiens (Human).